The sequence spans 231 residues: Probable GTP-binding protein EngB (231 aa).

Residues 51–231 (DLSEIAFAGR…RAQLAALASP (181 aa)) enclose the EngB-type G domain. GTP contacts are provided by residues 59–66 (GRSNVGKS), 86–90 (GRTQE), 109–112 (DLPG), 176–179 (TKAD), and 210–212 (TSS). Mg(2+) is bound by residues serine 66 and threonine 88.

The protein belongs to the TRAFAC class TrmE-Era-EngA-EngB-Septin-like GTPase superfamily. EngB GTPase family. The cofactor is Mg(2+).

Functionally, necessary for normal cell division and for the maintenance of normal septation. The sequence is that of Probable GTP-binding protein EngB from Rhodospirillum rubrum (strain ATCC 11170 / ATH 1.1.1 / DSM 467 / LMG 4362 / NCIMB 8255 / S1).